Here is a 416-residue protein sequence, read N- to C-terminus: Formyl-CoA:oxalate CoA-transferase (416 aa).

CoA is bound by residues 17-18 (QS), Arg-38, 72-75 (LNTK), 96-98 (NFH), His-104, and 137-140 (KAYE). The active-site Nucleophile is the Asp-169. 248-250 (GGQ) is a substrate binding site. Position 273–275 (273–275 (QEQ)) interacts with CoA.

Belongs to the CoA-transferase III family. Frc subfamily. In terms of assembly, homodimer.

It catalyses the reaction formyl-CoA + oxalate = oxalyl-CoA + formate. Its pathway is metabolic intermediate degradation; oxalate degradation; CO(2) and formate from oxalate: step 1/2. Its function is as follows. Involved in the catabolism of oxalate and in the adapatation to low pH via the induction of the oxalate-dependent acid tolerance response (ATR). Catalyzes the transfer of the CoA moiety from formyl-CoA to oxalate. The sequence is that of Formyl-CoA:oxalate CoA-transferase from Escherichia coli O6:H1 (strain CFT073 / ATCC 700928 / UPEC).